The sequence spans 298 residues: N-acetylmuramic acid 6-phosphate etherase 2 (298 aa).

In terms of domain architecture, SIS spans I51–R214. Residue E79 is the Proton donor of the active site. E110 is a catalytic residue.

The protein belongs to the GCKR-like family. MurNAc-6-P etherase subfamily. In terms of assembly, homodimer.

It carries out the reaction N-acetyl-D-muramate 6-phosphate + H2O = N-acetyl-D-glucosamine 6-phosphate + (R)-lactate. The protein operates within amino-sugar metabolism; N-acetylmuramate degradation. Specifically catalyzes the cleavage of the D-lactyl ether substituent of MurNAc 6-phosphate, producing GlcNAc 6-phosphate and D-lactate. The protein is N-acetylmuramic acid 6-phosphate etherase 2 of Bacillus licheniformis (strain ATCC 14580 / DSM 13 / JCM 2505 / CCUG 7422 / NBRC 12200 / NCIMB 9375 / NCTC 10341 / NRRL NRS-1264 / Gibson 46).